The sequence spans 298 residues: Tyrosine recombinase XerC (298 aa).

A Core-binding (CB) domain is found at 2–88 (TDLHTDVERY…ALRSFFDWLV (87 aa)). Residues 109-288 (HLPKNIDVDD…DFQHLASVYD (180 aa)) form the Tyr recombinase domain. Catalysis depends on residues R148, K172, H240, R243, and H266. Y275 (O-(3'-phospho-DNA)-tyrosine intermediate) is an active-site residue.

Belongs to the 'phage' integrase family. XerC subfamily. Forms a cyclic heterotetrameric complex composed of two molecules of XerC and two molecules of XerD, in which XerC interacts with XerD via its C-terminal region, XerD interacts with XerC via its C-terminal region and so on.

The protein resides in the cytoplasm. Its activity is regulated as follows. FtsK may regulate the catalytic switch between XerC and XerD in the heterotetrameric complex during the two steps of the recombination process. Site-specific tyrosine recombinase, which acts by catalyzing the cutting and rejoining of the recombining DNA molecules. Binds cooperatively to specific DNA consensus sequences that are separated from XerD binding sites by a short central region, forming the heterotetrameric XerC-XerD complex that recombines DNA substrates. The complex is essential to convert dimers of the bacterial chromosome into monomers to permit their segregation at cell division. It also contributes to the segregational stability of plasmids. In the complex XerC specifically exchanges the top DNA strands. This is Tyrosine recombinase XerC from Escherichia coli O127:H6 (strain E2348/69 / EPEC).